We begin with the raw amino-acid sequence, 406 residues long: Argininosuccinate synthase (406 aa).

Residues 12–20 and Ala-39 contribute to the ATP site; that span reads AYSGGLDTS. L-citrulline is bound by residues Tyr-90 and Ser-95. Gly-120 contacts ATP. The L-aspartate site is built by Thr-122, Asn-126, and Asp-127. Asn-126 is a binding site for L-citrulline. Residues Arg-130, Ser-179, Ser-188, Glu-264, and Tyr-276 each coordinate L-citrulline.

It belongs to the argininosuccinate synthase family. Type 1 subfamily. In terms of assembly, homotetramer.

The protein resides in the cytoplasm. It carries out the reaction L-citrulline + L-aspartate + ATP = 2-(N(omega)-L-arginino)succinate + AMP + diphosphate + H(+). It functions in the pathway amino-acid biosynthesis; L-arginine biosynthesis; L-arginine from L-ornithine and carbamoyl phosphate: step 2/3. The sequence is that of Argininosuccinate synthase from Geobacter sp. (strain M21).